A 152-amino-acid polypeptide reads, in one-letter code: Arginine repressor (152 aa).

Belongs to the ArgR family.

The protein localises to the cytoplasm. It participates in amino-acid biosynthesis; L-arginine biosynthesis [regulation]. Its function is as follows. Regulates arginine biosynthesis genes. This Caldicellulosiruptor bescii (strain ATCC BAA-1888 / DSM 6725 / KCTC 15123 / Z-1320) (Anaerocellum thermophilum) protein is Arginine repressor.